The following is a 225-amino-acid chain: PKHD-type hydroxylase YbiX (225 aa).

The Fe2OG dioxygenase domain maps to 78–177 (TLSTPLFNRY…RVASFMWIQS (100 aa)). Positions 96, 98, and 158 each coordinate Fe cation. R168 provides a ligand contact to 2-oxoglutarate.

It depends on Fe(2+) as a cofactor. L-ascorbate is required as a cofactor.

In Escherichia coli (strain SMS-3-5 / SECEC), this protein is PKHD-type hydroxylase YbiX.